The chain runs to 359 residues: Peptide chain release factor 1 (359 aa).

N5-methylglutamine is present on Gln235. The disordered stretch occupies residues 282-306 (RQRADSERSADRKSQVGSGDRSERI).

It belongs to the prokaryotic/mitochondrial release factor family. Post-translationally, methylated by PrmC. Methylation increases the termination efficiency of RF1.

It localises to the cytoplasm. Functionally, peptide chain release factor 1 directs the termination of translation in response to the peptide chain termination codons UAG and UAA. The chain is Peptide chain release factor 1 from Rhizobium rhizogenes (strain K84 / ATCC BAA-868) (Agrobacterium radiobacter).